The sequence spans 165 residues: UBA-like domain-containing protein 2-B (165 aa).

Residues 119 to 165 (QQPVWLPPASPTAHLHHHHHHPQPVWPPNSQPTGGPQKAMAAMDGQR) form a disordered region.

The protein belongs to the UBALD family.

This chain is UBA-like domain-containing protein 2-B (ubald2-b), found in Xenopus laevis (African clawed frog).